A 210-amino-acid chain; its full sequence is Large ribosomal subunit protein uL3 (210 aa).

Residues 133-156 are disordered; it reads ASHGNSLSHRVPGSIGQNQTPGKV. The residue at position 151 (Q151) is an N5-methylglutamine.

Belongs to the universal ribosomal protein uL3 family. Part of the 50S ribosomal subunit. Forms a cluster with proteins L14 and L19. In terms of processing, methylated by PrmB.

Functionally, one of the primary rRNA binding proteins, it binds directly near the 3'-end of the 23S rRNA, where it nucleates assembly of the 50S subunit. This Hamiltonella defensa subsp. Acyrthosiphon pisum (strain 5AT) protein is Large ribosomal subunit protein uL3.